The following is a 459-amino-acid chain: DnaJ homolog subfamily A member 1 homolog (459 aa).

Positions 6 to 73 (EYYERLGVKP…EKRKMYDSYG (68 aa)) constitute a J domain. Residues 158–243 (GKLVKISISR…CKGKRVIQGK (86 aa)) form a CR-type zinc finger. Zn(2+) contacts are provided by Cys-171, Cys-174, Cys-188, Cys-191, Cys-215, Cys-218, Cys-231, and Cys-234. CXXCXGXG motif repeat units lie at residues 171–178 (CKTCKGSG), 188–195 (CPTCNGSR), 215–222 (CHTCHGTG), and 231–238 (CKECKGKR). The interval 405 to 459 (NTNEQSSHGGAGGAYQQHGGAYGHQKQQQQGFNPADFGAQFGGGGPQQAQQCQQQ) is disordered. The segment covering 418–435 (AYQQHGGAYGHQKQQQQG) has biased composition (low complexity). A Cysteine methyl ester modification is found at Cys-456. Residue Cys-456 is the site of S-farnesyl cysteine attachment. Positions 457–459 (QQQ) are cleaved as a propeptide — removed in mature form.

Its subcellular location is the membrane. The protein resides in the cytoplasm. It localises to the microsome. It is found in the mitochondrion. The protein localises to the nucleus. Its subcellular location is the perinuclear region. Its function is as follows. Co-chaperone for Hsp70 family members. Plays a role in protein transport into mitochondria and in the regulation of apoptosis via its role as co-chaperone. The sequence is that of DnaJ homolog subfamily A member 1 homolog (dnaja1) from Dictyostelium discoideum (Social amoeba).